A 377-amino-acid chain; its full sequence is NADH dehydrogenase [ubiquinone] 1 alpha subcomplex subunit 9, mitochondrial (377 aa).

Residues 1-35 (MAAAAQSRVVRVLSMSRSAITAIATSVCHGPPCRQ) constitute a mitochondrion transit peptide. K175 carries the N6-succinyllysine modification. 2 positions are modified to N6-acetyllysine: K189 and K370.

This sequence belongs to the complex I NDUFA9 subunit family. Complex I is composed of 45 different subunits. This a component of the hydrophobic protein fraction. Interacts with BLOC1S1. Interacts with SLC2A4. Interacts with CLOCK. Interacts with RAB5IF. It depends on FAD as a cofactor. Acetylated on lysine residues. BLOC1S1 is required for acetylation. Acetylated by CLOCK in a circadian manner.

It localises to the mitochondrion matrix. In terms of biological role, accessory subunit of the mitochondrial membrane respiratory chain NADH dehydrogenase (Complex I), that is believed not to be involved in catalysis. Required for proper complex I assembly. Complex I functions in the transfer of electrons from NADH to the respiratory chain. The immediate electron acceptor for the enzyme is believed to be ubiquinone. The chain is NADH dehydrogenase [ubiquinone] 1 alpha subcomplex subunit 9, mitochondrial (NDUFA9) from Homo sapiens (Human).